The following is an 859-amino-acid chain: MSKNTSDLSSHTPMMQQYWRLKNQHPDQLMFYRMGDFYEIFYEDAKKAAKLLDITLTARGQSAGQAIPMCGIPYHAAEGYLAKLVKLGESVVICEQVGDPATSKGPVERQVVRIITPGTVSDEALLDERRDNLIAAVLGDERLFGLAVLDITSGNFSVLEIKGWENLLAELERINPVELLIPDDWPQGLPAEKRRGVRRRAPWDFERDSAHKSLCQQFSTQDLKGFGCETLTLAIGAAGCLLSYAKETQRTALPHLRSLRHERLDDTVVLDGASRRNLELDTNLAGGRDNTLQSVVDRCQTAMGSRLLTRWLNRPLRDLKVLEARQSSITCLLDGYRFERLQPQLKEIGDIERILARIGLRNARPRDLARLRDALAALPELQEAMTELEATHLNQLAATTSTYPELAALLAKAIIDNPPAVIRDGGVLKTGYDAELDELQSLSENAGQFLIDLEAREKARTGLANLKVGYNRIHGYFIELPSKQAEQAPADYIRRQTLKGAERFITPELKEFEDKALSAKSRALAREKMLYDALLETLISHLPPLQDTAGALAELDVLSNLAERALNLDLNCPRFVSEPCMRITQGRHPVVEQVLTTPFVANDLSLDDNTRMLVITGPNMGGKSTYMRQTALIVLLAHIGSFVPAASCELSLVDRIFTRIGSSDDLAGGRSTFMVEMSETANILHNATERSLVLMDEVGRGTSTFDGLSLAWAAAERLAHLRAYTLFATHYFELTVLPESEPLVANVHLNATEHNERIVFLHHVLPGPASQSYGLAVAQLAGVPSAVITRAREHLSRLETTSLPHEVAPQAPGKPSVPQQSDMFASLPHPVLDDLAKLDLDDMTPRRALEMLYTLKTRI.

Position 617–624 (617–624 (GPNMGGKS)) interacts with ATP. Residues 801 to 820 (TSLPHEVAPQAPGKPSVPQQ) are disordered.

The protein belongs to the DNA mismatch repair MutS family.

Functionally, this protein is involved in the repair of mismatches in DNA. It is possible that it carries out the mismatch recognition step. This protein has a weak ATPase activity. This Pseudomonas fluorescens (strain ATCC BAA-477 / NRRL B-23932 / Pf-5) protein is DNA mismatch repair protein MutS.